The chain runs to 920 residues: Isoleucine--tRNA ligase (920 aa).

A 'HIGH' region motif is present at residues proline 58–histidine 68. Glutamate 569 is an L-isoleucyl-5'-AMP binding site. A 'KMSKS' region motif is present at residues lysine 610–serine 614. Residue lysine 613 coordinates ATP. Zn(2+) contacts are provided by cysteine 895, cysteine 898, cysteine 910, and cysteine 913.

It belongs to the class-I aminoacyl-tRNA synthetase family. IleS type 1 subfamily. As to quaternary structure, monomer. Requires Zn(2+) as cofactor.

The protein localises to the cytoplasm. It catalyses the reaction tRNA(Ile) + L-isoleucine + ATP = L-isoleucyl-tRNA(Ile) + AMP + diphosphate. Functionally, catalyzes the attachment of isoleucine to tRNA(Ile). As IleRS can inadvertently accommodate and process structurally similar amino acids such as valine, to avoid such errors it has two additional distinct tRNA(Ile)-dependent editing activities. One activity is designated as 'pretransfer' editing and involves the hydrolysis of activated Val-AMP. The other activity is designated 'posttransfer' editing and involves deacylation of mischarged Val-tRNA(Ile). The chain is Isoleucine--tRNA ligase from Helicobacter pylori (strain Shi470).